The primary structure comprises 363 residues: NADH-quinone oxidoreductase subunit H (363 aa).

10 consecutive transmembrane segments (helical) span residues 29 to 49 (VLKI…YVVW), 62 to 82 (GPMY…KLLF), 96 to 116 (FVIA…VVPF), 127 to 147 (VGLL…ILAG), 163 to 183 (AAQV…VMIA), 202 to 222 (FFDW…VSGV), 238 to 257 (EIVA…LFFL), 264 to 286 (ILVS…QGWV), 299 to 319 (KGGW…YIWF), and 339 to 359 (FIPL…YGVI).

Belongs to the complex I subunit 1 family. In terms of assembly, NDH-1 is composed of 14 different subunits. Subunits NuoA, H, J, K, L, M, N constitute the membrane sector of the complex.

It localises to the cell inner membrane. It catalyses the reaction a quinone + NADH + 5 H(+)(in) = a quinol + NAD(+) + 4 H(+)(out). Its function is as follows. NDH-1 shuttles electrons from NADH, via FMN and iron-sulfur (Fe-S) centers, to quinones in the respiratory chain. The immediate electron acceptor for the enzyme in this species is believed to be ubiquinone. Couples the redox reaction to proton translocation (for every two electrons transferred, four hydrogen ions are translocated across the cytoplasmic membrane), and thus conserves the redox energy in a proton gradient. This subunit may bind ubiquinone. In Xanthomonas euvesicatoria pv. vesicatoria (strain 85-10) (Xanthomonas campestris pv. vesicatoria), this protein is NADH-quinone oxidoreductase subunit H.